We begin with the raw amino-acid sequence, 113 residues long: Nucleoid-associated protein Syncc9902_0023 (113 aa).

It belongs to the YbaB/EbfC family. Homodimer.

It is found in the cytoplasm. Its subcellular location is the nucleoid. Binds to DNA and alters its conformation. May be involved in regulation of gene expression, nucleoid organization and DNA protection. In Synechococcus sp. (strain CC9902), this protein is Nucleoid-associated protein Syncc9902_0023.